The chain runs to 648 residues: Threonine--tRNA ligase (648 aa).

Residues 1–61 (MIKITLPDGS…TTDGNLILYT (61 aa)) form the TGS domain. The catalytic stretch occupies residues 240–539 (DHRKLGKELE…LLEHTAGNFP (300 aa)). Zn(2+)-binding residues include Cys335, His386, and His516.

It belongs to the class-II aminoacyl-tRNA synthetase family. As to quaternary structure, homodimer. The cofactor is Zn(2+).

The protein resides in the cytoplasm. It catalyses the reaction tRNA(Thr) + L-threonine + ATP = L-threonyl-tRNA(Thr) + AMP + diphosphate + H(+). Catalyzes the attachment of threonine to tRNA(Thr) in a two-step reaction: L-threonine is first activated by ATP to form Thr-AMP and then transferred to the acceptor end of tRNA(Thr). Also edits incorrectly charged L-seryl-tRNA(Thr). The sequence is that of Threonine--tRNA ligase from Flavobacterium johnsoniae (strain ATCC 17061 / DSM 2064 / JCM 8514 / BCRC 14874 / CCUG 350202 / NBRC 14942 / NCIMB 11054 / UW101) (Cytophaga johnsonae).